The primary structure comprises 932 residues: uncharacterized protein (932 aa).

Disordered stretches follow at residues 26-120, 158-289, 304-617, 635-720, and 802-863; these read NINN…NMLT, MGIG…EEKK, NNNN…INHD, QQSQ…PPLV, and SVSS…FPLE. Low complexity-rich tracts occupy residues 41–105 and 163–241; these read NNNI…IISS and NNNN…YGNN. A compositionally biased stretch (polar residues) spans 242–253; that stretch reads TPVNYIHNNSTP. Residues 265–285 show a composition bias toward acidic residues; it reads SDEEDSVLYSSDDSEESDYEE. Residues 304–475 are compositionally biased toward low complexity; the sequence is NNNNINNNNM…NNNNNNNNNN (172 aa). Composition is skewed to polar residues over residues 476 to 492 and 527 to 540; these read ENYVGSSLSNSADNTES and DIPNSYPISPTKQQ. A compositionally biased stretch (low complexity) spans 548–590; sequence SPVYSPPNNLSPLSSPYLHHNSNNNSNNGGGNSNNNNTNFNYG. Over residues 606–617 the composition is skewed to basic and acidic residues; sequence GERDPPHVINHD. 3 stretches are compositionally biased toward low complexity: residues 635–666, 696–707, and 813–853; these read QQSQHQHQQQQQQPQSQQQPFYSPYQSPPSSS, SPPNTSISSLSS, and NSSN…NNNS. Residues 854–863 show a composition bias toward basic and acidic residues; that stretch reads EPKKPKFPLE.

This is an uncharacterized protein from Dictyostelium discoideum (Social amoeba).